Consider the following 116-residue polypeptide: Large ribosomal subunit protein uL18 (116 aa).

This sequence belongs to the universal ribosomal protein uL18 family. In terms of assembly, part of the 50S ribosomal subunit; part of the 5S rRNA/L5/L18/L25 subcomplex. Contacts the 5S and 23S rRNAs.

In terms of biological role, this is one of the proteins that bind and probably mediate the attachment of the 5S RNA into the large ribosomal subunit, where it forms part of the central protuberance. The polypeptide is Large ribosomal subunit protein uL18 (Pseudoalteromonas translucida (strain TAC 125)).